Consider the following 1377-residue polypeptide: Temperature-sensitive hemagglutinin tsh autotransporter (1377 aa).

A signal peptide spans 1 to 52 (MNRIYSLRYSAVARGFIAVSEFARKCVHKSVRRLCFPVLLLIPVLFSAGSLA). The region spanning 53-302 (GTVNNELGYQ…AVIPLDFIGQ (250 aa)) is the Peptidase S6 domain. Residues histidine 125, aspartate 153, and serine 259 each act as charge relay system in the active site. Residues 1111-1377 (DINGEAGTWV…AINANIRYSF (267 aa)) form the Autotransporter domain.

The C-terminus is blocked. Post-translationally, cleaved to release the mature protein from the outer membrane.

It is found in the periplasm. It localises to the secreted. The protein localises to the cell surface. The protein resides in the cell outer membrane. In terms of biological role, contributes to the development of lesions and deposition of fibrin in the avian air sacs. It can act both as an adhesin and as a serine protease. Agglutinates erythrocytes while in contact with the extracellular surface of the bacterial cells. Can adhere to purified hemoglobin and bind with great efficiency to extracellular matrix proteins. Cleaves casein and exhibits mucinolytic activity. The protein is Temperature-sensitive hemagglutinin tsh autotransporter (tsh) of Escherichia coli.